A 69-amino-acid polypeptide reads, in one-letter code: Conotoxin reg3f (69 aa).

A signal peptide spans 1-20 (MMSKLGVLLTICLLLFPLSA). Residues 21 to 52 (LPLDGDQPADQPAERMQDISPEQNPLFHPDKR) constitute a propeptide that is removed on maturation. 3 disulfide bridges follow: C54–C68, C55–C66, and C60–C69. At C69 the chain carries Cysteine amide.

Expressed by the venom duct.

It is found in the secreted. This is Conotoxin reg3f from Conus regius (Crown cone).